Reading from the N-terminus, the 354-residue chain is Ribosomal RNA large subunit methyltransferase M (354 aa).

S-adenosyl-L-methionine contacts are provided by residues Ser-183, 216 to 219, Asp-235, Asp-255, and Asp-271; that span reads SPGG. The active-site Proton acceptor is Lys-300.

It belongs to the class I-like SAM-binding methyltransferase superfamily. RNA methyltransferase RlmE family. RlmM subfamily. In terms of assembly, monomer.

The protein localises to the cytoplasm. It carries out the reaction cytidine(2498) in 23S rRNA + S-adenosyl-L-methionine = 2'-O-methylcytidine(2498) in 23S rRNA + S-adenosyl-L-homocysteine + H(+). In terms of biological role, catalyzes the 2'-O-methylation at nucleotide C2498 in 23S rRNA. This is Ribosomal RNA large subunit methyltransferase M from Pseudomonas putida (strain ATCC 47054 / DSM 6125 / CFBP 8728 / NCIMB 11950 / KT2440).